The chain runs to 609 residues: Glutamine--fructose-6-phosphate aminotransferase [isomerizing] (609 aa).

The active-site Nucleophile; for GATase activity is the Cys-2. Positions 2 to 217 (CGIVGAIAGR…EGDTAELRRD (216 aa)) constitute a Glutamine amidotransferase type-2 domain. 2 consecutive SIS domains span residues 284–425 (TADA…LQGR) and 458–599 (WAER…VDKP). The active-site For Fru-6P isomerization activity is Lys-604.

As to quaternary structure, homodimer.

Its subcellular location is the cytoplasm. It catalyses the reaction D-fructose 6-phosphate + L-glutamine = D-glucosamine 6-phosphate + L-glutamate. In terms of biological role, catalyzes the first step in hexosamine metabolism, converting fructose-6P into glucosamine-6P using glutamine as a nitrogen source. The sequence is that of Glutamine--fructose-6-phosphate aminotransferase [isomerizing] from Xanthomonas campestris pv. campestris (strain ATCC 33913 / DSM 3586 / NCPPB 528 / LMG 568 / P 25).